Reading from the N-terminus, the 400-residue chain is Cysteine desulfurase (400 aa).

Pyridoxal 5'-phosphate is bound by residues 72-73 (GT), Asn-152, Gln-180, and 200-202 (SGH). Residue Lys-203 is modified to N6-(pyridoxal phosphate)lysine. Thr-238 serves as a coordination point for pyridoxal 5'-phosphate. Catalysis depends on Cys-326, which acts as the Cysteine persulfide intermediate. Cys-326 contacts [2Fe-2S] cluster.

It belongs to the class-V pyridoxal-phosphate-dependent aminotransferase family. NifS/IscS subfamily. Homodimer. Pyridoxal 5'-phosphate serves as cofactor.

The enzyme catalyses (sulfur carrier)-H + L-cysteine = (sulfur carrier)-SH + L-alanine. Catalyzes the removal of elemental sulfur atoms from cysteine to produce alanine. Seems to participate in the biosynthesis of the nitrogenase metalloclusters by providing the inorganic sulfur required for the Fe-S core formation. The chain is Cysteine desulfurase from Gluconacetobacter diazotrophicus (strain ATCC 49037 / DSM 5601 / CCUG 37298 / CIP 103539 / LMG 7603 / PAl5).